Here is a 253-residue protein sequence, read N- to C-terminus: Probable transcriptional regulatory protein slr0989 (253 aa).

Residues 1-22 (MGGRKWQSIKRQKARVDAQKGK) form a disordered region.

It belongs to the TACO1 family.

Its subcellular location is the cytoplasm. The chain is Probable transcriptional regulatory protein slr0989 from Synechocystis sp. (strain ATCC 27184 / PCC 6803 / Kazusa).